Reading from the N-terminus, the 387-residue chain is Succinate--CoA ligase [ADP-forming] subunit beta (387 aa).

The region spanning 9-245 (KDLLESYGLK…KSQENAKELK (237 aa)) is the ATP-grasp domain. ATP contacts are provided by residues Lys-46, 53–55 (GRG), Glu-100, Tyr-103, and Glu-108. 2 residues coordinate Mg(2+): Asn-200 and Asp-214. Residues Asn-265 and 322 to 324 (GIV) each bind substrate.

Belongs to the succinate/malate CoA ligase beta subunit family. As to quaternary structure, heterotetramer of two alpha and two beta subunits. Mg(2+) is required as a cofactor.

It catalyses the reaction succinate + ATP + CoA = succinyl-CoA + ADP + phosphate. The enzyme catalyses GTP + succinate + CoA = succinyl-CoA + GDP + phosphate. Its pathway is carbohydrate metabolism; tricarboxylic acid cycle; succinate from succinyl-CoA (ligase route): step 1/1. Its function is as follows. Succinyl-CoA synthetase functions in the citric acid cycle (TCA), coupling the hydrolysis of succinyl-CoA to the synthesis of either ATP or GTP and thus represents the only step of substrate-level phosphorylation in the TCA. The beta subunit provides nucleotide specificity of the enzyme and binds the substrate succinate, while the binding sites for coenzyme A and phosphate are found in the alpha subunit. This is Succinate--CoA ligase [ADP-forming] subunit beta from Francisella tularensis subsp. holarctica (strain FTNF002-00 / FTA).